Consider the following 75-residue polypeptide: MAGMNTENENRVEALEVRLAFQDELLDALNATVARQQKEIDLLQQQIRLLYQQFRNAQPDDAPGGSLRDDIPPHY.

The protein belongs to the SlyX family.

The protein is Protein SlyX homolog of Chromobacterium violaceum (strain ATCC 12472 / DSM 30191 / JCM 1249 / CCUG 213 / NBRC 12614 / NCIMB 9131 / NCTC 9757 / MK).